Here is a 121-residue protein sequence, read N- to C-terminus: Large ribosomal subunit protein bL12 (121 aa).

This sequence belongs to the bacterial ribosomal protein bL12 family. As to quaternary structure, homodimer. Part of the ribosomal stalk of the 50S ribosomal subunit. Forms a multimeric L10(L12)X complex, where L10 forms an elongated spine to which 2 to 4 L12 dimers bind in a sequential fashion. Binds GTP-bound translation factors.

Functionally, forms part of the ribosomal stalk which helps the ribosome interact with GTP-bound translation factors. Is thus essential for accurate translation. The chain is Large ribosomal subunit protein bL12 from Vibrio cholerae serotype O1 (strain ATCC 39541 / Classical Ogawa 395 / O395).